A 345-amino-acid polypeptide reads, in one-letter code: NADPH dehydrogenase (345 aa).

An FMN-binding site is contributed by 23-26 (SPMC). Tyr28 serves as a coordination point for substrate. Residues Ala60 and Gln102 each coordinate FMN. Residue 164–167 (HGAH) participates in substrate binding. Residues Arg215 and 307–308 (GR) contribute to the FMN site.

The protein belongs to the NADH:flavin oxidoreductase/NADH oxidase family. NamA subfamily. Homotetramer. Requires FMN as cofactor.

The catalysed reaction is A + NADPH + H(+) = AH2 + NADP(+). In terms of biological role, catalyzes the reduction of the double bond of an array of alpha,beta-unsaturated aldehydes and ketones. It also reduces the nitro group of nitroester and nitroaromatic compounds. It could have a role in detoxification processes. This chain is NADPH dehydrogenase, found in Bacillus cereus (strain Q1).